The chain runs to 68 residues: DNA-directed RNA polymerase subunit omega (68 aa).

Belongs to the RNA polymerase subunit omega family. In terms of assembly, the RNAP catalytic core consists of 2 alpha, 1 beta, 1 beta' and 1 omega subunit. When a sigma factor is associated with the core the holoenzyme is formed, which can initiate transcription.

It catalyses the reaction RNA(n) + a ribonucleoside 5'-triphosphate = RNA(n+1) + diphosphate. Promotes RNA polymerase assembly. Latches the N- and C-terminal regions of the beta' subunit thereby facilitating its interaction with the beta and alpha subunits. The chain is DNA-directed RNA polymerase subunit omega from Listeria monocytogenes serotype 4b (strain CLIP80459).